The chain runs to 515 residues: Galactose/methyl galactoside import ATP-binding protein MglA (515 aa).

2 ABC transporter domains span residues 8 to 243 (LEMR…VGRE) and 254 to 499 (IPKE…AKYL). Residue 40–47 (GENGAGKS) participates in ATP binding.

Belongs to the ABC transporter superfamily. Galactose/methyl galactoside importer (TC 3.A.1.2.3) family. As to quaternary structure, the complex is composed of one ATP-binding protein (MglA), two transmembrane proteins (MglC) and a solute-binding protein (MglB).

The protein resides in the cell membrane. The catalysed reaction is D-galactose(out) + ATP + H2O = D-galactose(in) + ADP + phosphate + H(+). It catalyses the reaction methyl beta-D-galactoside(out) + ATP + H2O = methyl beta-D-galactoside(in) + ADP + phosphate + H(+). In terms of biological role, part of the ABC transporter complex MglABC involved in galactose/methyl galactoside import. Responsible for energy coupling to the transport system. This Clostridium perfringens (strain SM101 / Type A) protein is Galactose/methyl galactoside import ATP-binding protein MglA.